We begin with the raw amino-acid sequence, 279 residues long: Lactose operon transcription activator (279 aa).

Residues 174–272 (QHAVDFINTN…EISASEYRHH (99 aa)) enclose the HTH araC/xylS-type domain. 2 DNA-binding regions (H-T-H motif) span residues 191-212 (EDVA…KKNL) and 239-262 (ISDI…TKHF).

Transcriptional regulator of the lacPH genes for lactose utilization. This is Lactose operon transcription activator (lacR) from Staphylococcus xylosus.